Reading from the N-terminus, the 494-residue chain is UPF0371 protein SPT_0390 (494 aa).

The protein belongs to the UPF0371 family.

In Streptococcus pneumoniae (strain Taiwan19F-14), this protein is UPF0371 protein SPT_0390.